Here is a 695-residue protein sequence, read N- to C-terminus: Phosphate acetyltransferase (695 aa).

Residues 372-695 form a phosphate acetyltransferase region; that stretch reads AFRYRLVKRA…LTAVQAASQR (324 aa).

In the N-terminal section; belongs to the CobB/CobQ family. The protein in the C-terminal section; belongs to the phosphate acetyltransferase and butyryltransferase family. Homohexamer.

The protein resides in the cytoplasm. The enzyme catalyses acetyl-CoA + phosphate = acetyl phosphate + CoA. Its pathway is metabolic intermediate biosynthesis; acetyl-CoA biosynthesis; acetyl-CoA from acetate: step 2/2. Its function is as follows. Involved in acetate metabolism. The protein is Phosphate acetyltransferase (pta) of Nitrosomonas europaea (strain ATCC 19718 / CIP 103999 / KCTC 2705 / NBRC 14298).